Consider the following 433-residue polypeptide: 2,2-dialkylglycine decarboxylase (433 aa).

Lys-272 bears the N6-(pyridoxal phosphate)lysine mark.

It belongs to the class-III pyridoxal-phosphate-dependent aminotransferase family. In terms of assembly, homotetramer. The cofactor is pyridoxal 5'-phosphate.

The catalysed reaction is 2,2-dialkylglycine + pyruvate + H(+) = dialkyl ketone + L-alanine + CO2. Its function is as follows. The dialkylglycine decarboxylase is of interest because it normally catalyzes both decarboxylation and amino transfer. It may be more properly described as a decarboxylating aminotransferase rather than an aminotransferring decarboxylase. This is 2,2-dialkylglycine decarboxylase (dgdA) from Burkholderia cepacia (Pseudomonas cepacia).